The following is a 481-amino-acid chain: Matrilin-3 (481 aa).

The signal sequence occupies residues 1–27 (MLLSAPLRHLPGLLLLLWPLLLLPSLA). A VWFA domain is found at 78 to 253 (DLVFIIDSSR…GVIEKLSARF (176 aa)). Position 193 is an omega-N-methylarginine (Arg-193). EGF-like domains lie at 259 to 300 (ALDQ…KTCS), 301 to 342 (AIDK…RTCA), 343 to 384 (ALDK…KTCS), and 385 to 426 (VRNK…KTCS). Intrachain disulfides connect Cys-263–Cys-274, Cys-270–Cys-284, Cys-286–Cys-299, Cys-305–Cys-316, Cys-312–Cys-326, Cys-328–Cys-341, Cys-347–Cys-358, Cys-354–Cys-368, Cys-370–Cys-383, Cys-389–Cys-400, Cys-396–Cys-410, and Cys-412–Cys-425. Asn-321 carries an N-linked (GlcNAc...) asparagine glycan. Ser-436 is subject to Phosphoserine; by FAM20C. A coiled-coil region spans residues 451-475 (EKVSSHLQKLNTKLDNILKKLKVTE).

Can form homooligomers (monomers, dimers, trimers and tetramers) and heterooligomers with matrilin-1. Interacts with COMP. Component of a complex containing at least CRELD2, MANF, MATN3 and PDIA4. In terms of tissue distribution, strongly expressed in growing skeletal tissue such as epiphyseal growth plate or in bone undergoing growth and remodeling. In the bone, actively synthesized in osteoblasts and osteocytes. Expressed in cartilage of sternum, femur, vertebrae, trachea, articular and epiphyseal cartilage, cartilage of developing bones and bones.

It is found in the secreted. Functionally, major component of the extracellular matrix of cartilage and may play a role in the formation of extracellular filamentous networks. The chain is Matrilin-3 (Matn3) from Mus musculus (Mouse).